Consider the following 144-residue polypeptide: uncharacterized protein (144 aa).

Positions 4–111 constitute an HIT domain; it reads VFCAIIAGEA…LPPRNGDKLS (108 aa). The Histidine triad motif motif lies at 96 to 100; that stretch reads HVHLH.

This is an uncharacterized protein from Mycobacterium tuberculosis (strain CDC 1551 / Oshkosh).